The following is a 115-amino-acid chain: MTKILVLCIGLISFSASASADTSYTEIREYVNRTAADYCGKNKACQAEFAQKLIYAYKDGERDKSSRYKNDTLLKRYAKKWNTLECSVAEEKDKAACHSMVDRLVDSYNRGLSTR.

Its function is as follows. Binds to the host (E.coli) valyl--tRNA ligase and thereby changes several of its physicochemical properties. The chain is Valyl--tRNA ligase modifier (vs) from Enterobacteria phage T4 (Bacteriophage T4).